Reading from the N-terminus, the 205-residue chain is Small ribosomal subunit protein uS4 (205 aa).

The region spanning 94 to 172 (SRLDSIVYRM…TTPDYVSFDV (79 aa)) is the S4 RNA-binding domain.

Belongs to the universal ribosomal protein uS4 family. As to quaternary structure, part of the 30S ribosomal subunit. Contacts protein S5. The interaction surface between S4 and S5 is involved in control of translational fidelity.

In terms of biological role, one of the primary rRNA binding proteins, it binds directly to 16S rRNA where it nucleates assembly of the body of the 30S subunit. Its function is as follows. With S5 and S12 plays an important role in translational accuracy. The protein is Small ribosomal subunit protein uS4 of Rickettsia bellii (strain OSU 85-389).